The following is a 150-amino-acid chain: SKP1-like protein 17 (150 aa).

The segment at leucine 92 to asparagine 150 is interaction with the F-box domain of F-box proteins.

The protein belongs to the SKP1 family. Part of a SCF (SKP1-cullin-F-box) protein ligase complex. Interacts with CPR1/CPR30. In terms of tissue distribution, mainly detected in the siliques.

Its subcellular location is the nucleus. The protein operates within protein modification; protein ubiquitination. Its function is as follows. Involved in ubiquitination and subsequent proteasomal degradation of target proteins. Together with CUL1, RBX1 and a F-box protein, it forms a SCF E3 ubiquitin ligase complex. The functional specificity of this complex depends on the type of F-box protein. In the SCF complex, it serves as an adapter that links the F-box protein to CUL1. Probably implicated in incompatibility response after hybridization. The protein is SKP1-like protein 17 (ASK17) of Arabidopsis thaliana (Mouse-ear cress).